The following is a 153-amino-acid chain: 3-hydroxyacyl-[acyl-carrier-protein] dehydratase FabZ (153 aa).

Residue His54 is part of the active site.

This sequence belongs to the thioester dehydratase family. FabZ subfamily.

It is found in the cytoplasm. The enzyme catalyses a (3R)-hydroxyacyl-[ACP] = a (2E)-enoyl-[ACP] + H2O. In terms of biological role, involved in unsaturated fatty acids biosynthesis. Catalyzes the dehydration of short chain beta-hydroxyacyl-ACPs and long chain saturated and unsaturated beta-hydroxyacyl-ACPs. The protein is 3-hydroxyacyl-[acyl-carrier-protein] dehydratase FabZ of Shewanella denitrificans (strain OS217 / ATCC BAA-1090 / DSM 15013).